We begin with the raw amino-acid sequence, 261 residues long: GTP cyclohydrolase FolE2 (261 aa).

Belongs to the GTP cyclohydrolase IV family.

The enzyme catalyses GTP + H2O = 7,8-dihydroneopterin 3'-triphosphate + formate + H(+). Its pathway is cofactor biosynthesis; 7,8-dihydroneopterin triphosphate biosynthesis; 7,8-dihydroneopterin triphosphate from GTP: step 1/1. In terms of biological role, converts GTP to 7,8-dihydroneopterin triphosphate. The chain is GTP cyclohydrolase FolE2 from Herminiimonas arsenicoxydans.